Reading from the N-terminus, the 290-residue chain is 4-hydroxy-tetrahydrodipicolinate synthase (290 aa).

Residue Thr-44 participates in pyruvate binding. The active-site Proton donor/acceptor is the Tyr-132. Lys-160 (schiff-base intermediate with substrate) is an active-site residue. Ile-202 contributes to the pyruvate binding site.

Belongs to the DapA family. As to quaternary structure, homotetramer; dimer of dimers.

It localises to the cytoplasm. The enzyme catalyses L-aspartate 4-semialdehyde + pyruvate = (2S,4S)-4-hydroxy-2,3,4,5-tetrahydrodipicolinate + H2O + H(+). It functions in the pathway amino-acid biosynthesis; L-lysine biosynthesis via DAP pathway; (S)-tetrahydrodipicolinate from L-aspartate: step 3/4. Catalyzes the condensation of (S)-aspartate-beta-semialdehyde [(S)-ASA] and pyruvate to 4-hydroxy-tetrahydrodipicolinate (HTPA). The polypeptide is 4-hydroxy-tetrahydrodipicolinate synthase (Geotalea daltonii (strain DSM 22248 / JCM 15807 / FRC-32) (Geobacter daltonii)).